The chain runs to 336 residues: Deoxyhypusine hydroxylase (336 aa).

HEAT-like PBS-type repeat units lie at residues 68-94 (LKHE…VVQD) and 101-127 (CRHE…LRDN). His-70, Glu-71, His-103, and Glu-104 together coordinate Fe cation. Positions 158 to 179 (LKPSDFTSIDPAPPMPLTAKEP) are disordered. HEAT-like PBS-type repeat units lie at residues 235-261 (FRHE…TLSD) and 268-295 (VRHE…FLND). Residues His-237, Glu-238, His-270, and Glu-271 each coordinate Fe cation.

The protein belongs to the deoxyhypusine hydroxylase family. Fe(2+) serves as cofactor.

It localises to the cytoplasm. The protein resides in the nucleus. It catalyses the reaction [eIF5A protein]-deoxyhypusine + AH2 + O2 = [eIF5A protein]-hypusine + A + H2O. It participates in protein modification; eIF5A hypusination. In terms of biological role, catalyzes the hydroxylation of the N(6)-(4-aminobutyl)-L-lysine intermediate to form hypusine, an essential post-translational modification only found in mature eIF-5A factor. The sequence is that of Deoxyhypusine hydroxylase (lia1) from Emericella nidulans (strain FGSC A4 / ATCC 38163 / CBS 112.46 / NRRL 194 / M139) (Aspergillus nidulans).